Consider the following 341-residue polypeptide: Hygromycin-B 4-O-kinase (341 aa).

Asp-198 (proton acceptor) is an active-site residue.

The protein belongs to the aminoglycoside phosphotransferase family.

It catalyses the reaction hygromycin B + ATP = 4-O-phosphohygromycin B + ADP + H(+). In terms of biological role, the aminoglycoside phosphotransferases achieve inactivation of their antibiotic substrates by phosphorylation. Only phosphorylates hygromycin and closely related compounds such as demethyl analogs and destomycin. This Escherichia coli protein is Hygromycin-B 4-O-kinase (hph).